A 1147-amino-acid chain; its full sequence is MRRHSSGSSEDDDASPVEAPHANSSRFSAKDSRSSAHPTTKLDHNRNADRPPSFSISRRSSSINWRLPESRNGNGTVEKRPSPERTSPSSPLGLIMTANGELRTKEVEKTPETVIPARRPPWRSPWAITFSALVAAIVGIGFLVAVLHSSVTRQLDPKGCRMSYMRPSYAKLNEFDTEHTRLASKYSLYLYREQDIDRDTKVRGVPVLFIPGNAGSYKQVRPIAAEAANYFHNVLQHDESAMNAGTRNLDFFTVDFNEDITAFHGQTLLDQAEYLNEAVRYILSLYLDPRVADRDPDLPDPTSVIVLGHSMGGIVARTMLIMPNFQSHSINTIITMSAPHARPPVSFDSQSVQTYKDINDYWRRAYSQQWANDNPLWHVTLVSIAGGGLDTVVPSDYASVESLVPDTHGFTVFTSTIPNVWTSMDHQAILWCDQFRKVVAQAIYDVVDVHRATQTKPRAERMRVFKKWFLTGMETIAEKAAPRSEPTTLLTVDDNSDSIIAEGERLVLRNLGTAGTVRAHLMPIPPSGSPGMKRFTLLTDTKLDKPGEHGKLEVLFCSVIPSQPSQSWAGFPSQMDLSKGSTGSTRLACRSAAPDVVSLPASTSSTQFPFYLNGEKEITPFSYLEYGVDDIAEHQFVAVVEKTTAPTPGFVVAEFSDYTQSHRTRHISLRSLLTFGMKFHLPAERPMVSEVKVPSLQSSLLAYNLRISHQDCNGDSELFAPLVRQYLAEPYESKYFVNAREATVSLHGVAPYVPPPLTGKLDENGLSFQFWTDPTCSSSIHIELTADFMGSLGKLYMRYRTVFAAFPLFIVALVLRKQFRVYDTTGMFIPFLEGLDLCLRQSIPLMLASLTLLTLSTGIMAPASNASFWHWRNGTSSIMDFQHNDLLIGTEDPLFLFLIPLIAIVCVGVCTVFNYMALTLTHLLGVLASLVTFHPGWIGNEDRKKTTPAAFFSPSPRRRMITTAVLLLLVTTMVPYQFAYLVACLVQLMTTVRAQRIASELRSTANSNFYNYTHSIFILMLWILPINLPTFVVWVHNLAVHWLTPFSSHHNVLSVMPFIVLVETLTTGKMIPRMGSRLKHVTSLLLFGMAVYAAVYGVTYAYTLHYVANFLAFWLAIVHSTSDSWSLAGLTHLYSGDAGIRKRGKEP.

Residues 1-94 form a disordered region; it reads MRRHSSGSSE…RTSPSSPLGL (94 aa). Asparagine 23 carries an N-linked (GlcNAc...) asparagine glycan. Positions 28–49 are enriched in basic and acidic residues; it reads SAKDSRSSAHPTTKLDHNRNAD. Low complexity predominate over residues 50–63; the sequence is RPPSFSISRRSSSI. N-linked (GlcNAc...) asparagine glycosylation is present at asparagine 74. Residues 127 to 147 traverse the membrane as a helical segment; the sequence is AITFSALVAAIVGIGFLVAVL. Serine 310 is an active-site residue. A run of 2 helical transmembrane segments spans residues 795-815 and 843-863; these read LYMR…ALVL and IPLM…MAPA. Asparagine 865 and asparagine 873 each carry an N-linked (GlcNAc...) asparagine glycan. A run of 3 helical transmembrane segments spans residues 893–913, 918–938, and 965–985; these read PLFL…CTVF, LTLT…PGWI, and VLLL…VACL. N-linked (GlcNAc...) asparagine glycosylation is present at asparagine 1011. 3 helical membrane-spanning segments follow: residues 1015–1035, 1052–1072, and 1084–1104; these read SIFI…VVWV, VLSV…KMIP, and LLLF…AYTL.

Belongs to the GPI inositol-deacylase family.

It localises to the endoplasmic reticulum membrane. In terms of biological role, involved in inositol deacylation of GPI-anchored proteins which plays important roles in the quality control and ER-associated degradation of GPI-anchored proteins. The polypeptide is GPI inositol-deacylase (BST1) (Chaetomium globosum (strain ATCC 6205 / CBS 148.51 / DSM 1962 / NBRC 6347 / NRRL 1970) (Soil fungus)).